A 594-amino-acid polypeptide reads, in one-letter code: Elongation factor 4 (594 aa).

Residues 2 to 184 (KNIRNFSIIA…TIVAKVPAPE (183 aa)) form the tr-type G domain. GTP is bound by residues 14–19 (DHGKST) and 131–134 (NKID).

The protein belongs to the TRAFAC class translation factor GTPase superfamily. Classic translation factor GTPase family. LepA subfamily.

The protein resides in the cell inner membrane. It catalyses the reaction GTP + H2O = GDP + phosphate + H(+). Its function is as follows. Required for accurate and efficient protein synthesis under certain stress conditions. May act as a fidelity factor of the translation reaction, by catalyzing a one-codon backward translocation of tRNAs on improperly translocated ribosomes. Back-translocation proceeds from a post-translocation (POST) complex to a pre-translocation (PRE) complex, thus giving elongation factor G a second chance to translocate the tRNAs correctly. Binds to ribosomes in a GTP-dependent manner. This chain is Elongation factor 4, found in Francisella tularensis subsp. tularensis (strain FSC 198).